A 35-amino-acid chain; its full sequence is Photosystem II reaction center protein T (35 aa).

Residues 3-23 form a helical membrane-spanning segment; sequence SVAYILIFTLCIGTIFFAIAF.

Belongs to the PsbT family. PSII is composed of 1 copy each of membrane proteins PsbA, PsbB, PsbC, PsbD, PsbE, PsbF, PsbH, PsbI, PsbJ, PsbK, PsbL, PsbM, PsbT, PsbX, PsbY, PsbZ, Psb30/Ycf12, peripheral proteins PsbO, CyanoQ (PsbQ), PsbU, PsbV and a large number of cofactors. It forms dimeric complexes.

It localises to the cellular thylakoid membrane. In terms of biological role, found at the monomer-monomer interface of the photosystem II (PS II) dimer, plays a role in assembly and dimerization of PSII. PSII is a light-driven water plastoquinone oxidoreductase, using light energy to abstract electrons from H(2)O, generating a proton gradient subsequently used for ATP formation. The chain is Photosystem II reaction center protein T from Nostoc punctiforme (strain ATCC 29133 / PCC 73102).